The chain runs to 340 residues: NADH-quinone oxidoreductase subunit H (340 aa).

8 helical membrane-spanning segments follow: residues Thr4–Ile24, Tyr78–Ile98, Val113–Ala133, Val151–Met171, Met184–Ile204, Ser244–Phe264, Ile273–Val293, and Val316–Val336.

It belongs to the complex I subunit 1 family. As to quaternary structure, NDH-1 is composed of 14 different subunits. Subunits NuoA, H, J, K, L, M, N constitute the membrane sector of the complex.

It localises to the cell inner membrane. It carries out the reaction a quinone + NADH + 5 H(+)(in) = a quinol + NAD(+) + 4 H(+)(out). In terms of biological role, NDH-1 shuttles electrons from NADH, via FMN and iron-sulfur (Fe-S) centers, to quinones in the respiratory chain. The immediate electron acceptor for the enzyme in this species is believed to be ubiquinone. Couples the redox reaction to proton translocation (for every two electrons transferred, four hydrogen ions are translocated across the cytoplasmic membrane), and thus conserves the redox energy in a proton gradient. This subunit may bind ubiquinone. In Legionella pneumophila (strain Corby), this protein is NADH-quinone oxidoreductase subunit H.